A 361-amino-acid polypeptide reads, in one-letter code: Tegument protein UL51 homolog (361 aa).

Cys-8 carries the S-palmitoyl cysteine; by host lipid modification. Residues 251–299 (GDEEDEVTVMSPSPEPVQQQPPVEPVQQQPQGRGSHRRRYKESAPQETL) form a disordered region. The segment covering 266–281 (PVQQQPPVEPVQQQPQ) has biased composition (low complexity).

Belongs to the herpesviridae UL51 family. In terms of assembly, oligomerizes. Interacts with UL103; this interaction mediates UL103 incorporation to virions. Post-translationally, phosphorylated. Palmitoylation is necessary for Golgi localization.

The protein resides in the virion tegument. The protein localises to the host cytoplasm. It is found in the host Golgi apparatus. In terms of biological role, plays several roles during the time course of infection, including egress of virus particles from the perinuclear space and secondary envelopment of cytoplasmic capsids that bud into specific trans-Golgi network (TGN)-derived membranes. The protein is Tegument protein UL51 homolog (UL71) of Homo sapiens (Human).